Reading from the N-terminus, the 979-residue chain is Calsyntenin-1 (979 aa).

Positions 1-28 (MLRRPAPALAPAVRLLLAGLLCGGGVWA) are cleaved as a signal peptide. Topologically, residues 29–859 (ARVNKHKPWL…PHPFAVVPST (831 aa)) are extracellular. 2 Cadherin domains span residues 38–164 (LEPT…APVF) and 165–265 (KEKS…SPGW). N-linked (GlcNAc...) asparagine glycans are attached at residues N346, N366, and N515. Residues 860-880 (ATVVIVVCVSFLVFMIILGVF) form a helical membrane-spanning segment. Residues 881 to 979 (RIRAAHQRTM…LEWDDSTLSY (99 aa)) lie on the Cytoplasmic side of the membrane. A disordered region spans residues 915-979 (METYEDQHSS…LEWDDSTLSY (65 aa)). A compositionally biased stretch (acidic residues) spans 925 to 959 (EEEEEEEEEEESEDGEEEEDITSAESESSEEEEGG).

This sequence belongs to the calsyntenin family. Directly interacts with APBA2. Forms a tripartite complex with APBA2 and APP. The CTF1 chain interacts with PSEN1. Interacts with KLC1 and APBB1. As to quaternary structure, interacts with APBB1; this interaction stabilizes AlcICD metabolism. In terms of assembly, interacts with PSEN1. Proteolytically processed under normal cellular conditions. A primary zeta-cleavage generates a large extracellular (soluble) N-terminal domain (sAlc) and a short C-terminal transmembrane fragment (CTF1). A secondary cleavage catalyzed by presenilin gamma-secretase within the transmembrane domain releases the beta-Alc-alpha chain in the extracellular milieu and produces an intracellular fragment (AlcICD). Beta-Alc-alpha secretion is largely dependent upon PSEN1 and PSEN2. This processing is strongly suppressed in the tripartite complex formed with APBA2 and APP, which seems to prevent the association with PSEN1. Highly expressed in the brain (at protein level), with over 90% of the neurons expressing detectable amounts. In the brain, relatively high levels in the cerebral cortex, striatum, hippocampus and thalamus. Moderate levels in the cerebellum. Low levels in the olfactory bulb, midbrain and pons (at protein level). Not detected in Purkinje cells. Expressed at low levels in the lung (at protein level). At the mRNA level, weakly detected in the kidney, lung, skeletal muscle, heart and testis. Not expressed in the sciatic nerve fiber.

The protein resides in the postsynaptic cell membrane. Its subcellular location is the endoplasmic reticulum membrane. It is found in the golgi apparatus membrane. The protein localises to the cell projection. It localises to the neuron projection. The protein resides in the vesicle. Its subcellular location is the nucleus. Functionally, postsynaptic adhesion molecule that binds to presynaptic neurexins to mediate both excitatory and inhibitory synapse formation. Promotes synapse development by acting as a cell adhesion molecule at the postsynaptic membrane, which associates with neurexin-alpha at the presynaptic membrane. Also functions as a cargo in axonal anterograde transport by acting as a molecular adapter that promotes KLC1 association with vesicles. Complex formation with APBA2 and APP, stabilizes APP metabolism and enhances APBA2-mediated suppression of beta-APP40 secretion, due to the retardation of intracellular APP maturation. Its function is as follows. As intracellular fragment AlcICD, suppresses APBB1-dependent transactivation stimulated by APP C-terminal intracellular fragment (AICD), most probably by competing with AICD for APBB1-binding. In complex with APBA2 and C99, a C-terminal APP fragment, abolishes C99 interaction with PSEN1 and thus APP C99 cleavage by gamma-secretase, most probably through stabilization of the direct interaction between APBA2 and APP. This is Calsyntenin-1 from Mus musculus (Mouse).